Consider the following 428-residue polypeptide: MMKLIKYPSKEQWAELLKRPALNTESLFDTVRTIINKVRAEGDKAVLEYEAAFDKVTLSALTVTSEEIQKAEGLISDELKSAITLAKRNIETFHSSQRFVGKKVETMEGVTCWQKAVGIEKVGLYIPGGTAPLFSTVLMLAVPAKIAGCREIVLCTPPDKNGNIHPAILFAAQLAGVSKIFKAGGVQAIAAMAYGTESVPKVYKIFGPGNQYVTAAKQLVSLRDVAIDMPAGPSEVEVLADASANPVFVAADLLSQAEHGVDSQAMLITTSEKLQAEVMEEVNRQLAKLPRREIAAKSLENSKLILVKDMDEALELTNAYAPEHLIVETENYLEVAERVINAGSVFLGSLTPESAGDYASGTNHTLPTNGYAKAYSGVSLDSFIRKITFQEILPQGMKVIGPAIEEMAANELLDAHKNAVTVRLNTLK.

3 residues coordinate NAD(+): Tyr-125, Gln-187, and Asn-210. Substrate is bound by residues Ser-234, Gln-256, and His-259. Positions 256 and 259 each coordinate Zn(2+). Residues Glu-323 and His-324 each act as proton acceptor in the active site. 4 residues coordinate substrate: His-324, Asp-357, Glu-411, and His-416. Asp-357 lines the Zn(2+) pocket. His-416 is a Zn(2+) binding site.

This sequence belongs to the histidinol dehydrogenase family. Zn(2+) serves as cofactor.

It carries out the reaction L-histidinol + 2 NAD(+) + H2O = L-histidine + 2 NADH + 3 H(+). The protein operates within amino-acid biosynthesis; L-histidine biosynthesis; L-histidine from 5-phospho-alpha-D-ribose 1-diphosphate: step 9/9. Its function is as follows. Catalyzes the sequential NAD-dependent oxidations of L-histidinol to L-histidinaldehyde and then to L-histidine. The sequence is that of Histidinol dehydrogenase from Bacteroides thetaiotaomicron (strain ATCC 29148 / DSM 2079 / JCM 5827 / CCUG 10774 / NCTC 10582 / VPI-5482 / E50).